We begin with the raw amino-acid sequence, 225 residues long: Small ribosomal subunit protein uS3 (225 aa).

The region spanning 38–106 is the KH type-2 domain; that stretch reads LRKFLQGKLQ…EVSLNIVEIR (69 aa).

Belongs to the universal ribosomal protein uS3 family. As to quaternary structure, part of the 30S ribosomal subunit. Forms a tight complex with proteins S10 and S14.

Its function is as follows. Binds the lower part of the 30S subunit head. Binds mRNA in the 70S ribosome, positioning it for translation. The sequence is that of Small ribosomal subunit protein uS3 from Rhodospirillum centenum (strain ATCC 51521 / SW).